We begin with the raw amino-acid sequence, 158 residues long: Cysteine-rich venom protein VAR7 (158 aa).

A signal peptide spans 1-22 (MILLKLYLTLAAILCQSRGTTS). One can recognise an SCP domain in the interval 41 to 158 (NKHNDLRRTV…MGCAINLCPN (118 aa)). Cysteine 77 and cysteine 156 are oxidised to a cystine.

It belongs to the CRISP family. Contains 8 disulfide bonds. Expressed by the venom gland.

Its subcellular location is the secreted. In terms of biological role, blocks ryanodine receptors, and potassium channels. The polypeptide is Cysteine-rich venom protein VAR7 (Varanus acanthurus (Ridge-tailed monitor)).